Here is a 379-residue protein sequence, read N- to C-terminus: Armadillo repeat-containing X-linked protein 3 (379 aa).

Residues 1 to 6 are Mitochondrial intermembrane-facing; the sequence is MGYARK. 2 mitochondrion outer membrane (MOM)-targeting sequence regions span residues 1–6 and 26–37; these read MGYARK and RLTRGRKQNKEK. A helical; Signal-anchor transmembrane segment spans residues 7 to 29; it reads VGWVTAGLVIGAGACYCIYRLTR. The Cytoplasmic segment spans residues 30 to 379; that stretch reads GRKQNKEKMA…TERMFPKSQE (350 aa). Positions 34–69 are disordered; it reads NKEKMAEGGPGDVEDAGDCSGARYNDWSDDDDDSNE. S61, S67, and S72 each carry phosphoserine. The nuclear localization signal stretch occupies residues 89 to 98; sequence RARARARARA. Position 110 is a phosphoserine (S110). ARM repeat units follow at residues 111 to 151, 153 to 192, and 233 to 272; these read PNSD…NNAA, AFNRDIIRDLGGLPIVAKILNTRDPIVKEKALIVLNNLSV, and VTNEYQHILANSISDFFRLFSAGNEETKLQVLKLLLNLAE.

Belongs to the eutherian X-chromosome-specific Armcx family. In terms of assembly, interacts (via ARM domain) with MIRO1, MIRO2 and TRAK2. The interaction with Miro is calcium-dependent. Interacts with Sox10.

The protein resides in the mitochondrion outer membrane. It is found in the cytoplasm. Its subcellular location is the nucleus. Its function is as follows. Regulates mitochondrial aggregation and transport in axons in living neurons. May link mitochondria to the Trak2-kinesin motor complex via its interaction with Miro and Trak2. Mitochondrial distribution and dynamics is regulated through Armcx3 protein degradation, which is promoted by PCK and negatively regulated by Wnt1. Enhances the Sox10-mediated transactivation of the neuronal acetylcholine receptor subunit alpha-3 and beta-4 subunit gene promoters. The sequence is that of Armadillo repeat-containing X-linked protein 3 (Armcx3) from Rattus norvegicus (Rat).